A 36-amino-acid polypeptide reads, in one-letter code: Photosystem I reaction center subunit VIII (36 aa).

Residues 9-29 (ISVPLVGLVFPAITMVLSFIY) traverse the membrane as a helical segment.

It belongs to the PsaI family.

It is found in the plastid. It localises to the chloroplast thylakoid membrane. Functionally, may help in the organization of the PsaL subunit. The polypeptide is Photosystem I reaction center subunit VIII (Huperzia lucidula (Shining clubmoss)).